Reading from the N-terminus, the 842-residue chain is ATP-binding cassette sub-family B member 6 (842 aa).

Topologically, residues 1-26 (MVTVGNYCEAEGPVGPAWMQDGLSPC) are lumenal. Residues 1–205 (MVTVGNYCEA…SGGLFVLGLW (205 aa)) form a required for the lysosomal targeting region. The interval 1-236 (MVTVGNYCEA…RSQVRSAAQQ (236 aa)) is required for ATPase activity. N6 carries N-linked (GlcNAc...) asparagine glycosylation. C8 and C26 are oxidised to a cystine. The chain crosses the membrane as a helical span at residues 27–47 (FFFTLVPSTRMALGTLALVLA). Residues 48 to 72 (LPCRRRERPAGADSLSWGAGPRISP) lie on the Cytoplasmic side of the membrane. A helical transmembrane segment spans residues 73-93 (YVLQLLLATLQAALPLAGLAG). Over 94 to 106 (RVGTARGAPLPSY) the chain is Lumenal. Residues 107–127 (LLLASVLESLAGACGLWLLVV) traverse the membrane as a helical segment. The Cytoplasmic segment spans residues 128–147 (ERSQARQRLAMGIWIKFRHS). The helical transmembrane segment at 148–168 (PGLLLLWTVAFAAENLALVSW) threads the bilayer. Residues 169 to 185 (NSPQWWWARADLGQQVQ) are Lumenal-facing. Residues 186 to 206 (FSLWVLRYVVSGGLFVLGLWA) traverse the membrane as a helical segment. Residues 207–263 (PGLRPQSYTLQVHEEDQDVERSQVRSAAQQSTWRDFGRKLRLLSGYLWPRGSPALQL) lie on the Cytoplasmic side of the membrane. A helical transmembrane segment spans residues 264 to 284 (VVLICLGLMGLERALNVLVPI). The ABC transmembrane type-1 domain occupies 265–556 (VLICLGLMGL…FGTYYRMIQT (292 aa)). Residues 285-291 (FYRNIVN) are Lumenal-facing. Residues 292–312 (LLTEKAPWNSLAWTVTSYVFL) traverse the membrane as a helical segment. At 313–375 (KFLQGGGTGS…TGEVLRIADR (63 aa)) the chain is on the cytoplasmic side. The chain crosses the membrane as a helical span at residues 376–396 (GTSSVTGLLSYLVFNVIPTLA). D397 is a topological domain (lumenal). The helical transmembrane segment at 398–418 (IIIGIIYFSMFFNAWFGLIVF) threads the bilayer. The Cytoplasmic portion of the chain corresponds to 419 to 499 (LCMSLYLTLT…SSASLVLLNQ (81 aa)). The helical transmembrane segment at 500 to 520 (TQNLVIGLGLLAGSLLCAYFV) threads the bilayer. At 521-529 (TEQKLQVGD) the chain is on the lumenal side. A helical transmembrane segment spans residues 530–550 (YVLFGTYIIQLYMPLNWFGTY). Topologically, residues 551-842 (YRMIQTNFID…EDTKPQTMER (292 aa)) are cytoplasmic. In terms of domain architecture, ABC transporter spans 590-824 (IEFENVHFSY…GGVYADMWQL (235 aa)). ATP is bound by residues Y599 and 623-634 (GPSGAGKSTILR).

This sequence belongs to the ABC transporter superfamily. ABCB family. Heavy Metal importer (TC 3.A.1.210) subfamily. As to quaternary structure, homodimer. In terms of processing, N-glycosylated. As to expression, widely expressed. High expression is detected in the retinal epithelium. Expressed in mature erythrocytes.

Its subcellular location is the cell membrane. The protein localises to the mitochondrion outer membrane. The protein resides in the endoplasmic reticulum membrane. It localises to the golgi apparatus membrane. It is found in the endosome membrane. Its subcellular location is the lysosome membrane. The protein localises to the late endosome membrane. The protein resides in the early endosome membrane. It localises to the secreted. It is found in the extracellular exosome. Its subcellular location is the mitochondrion. The protein localises to the endosome. The protein resides in the multivesicular body membrane. It localises to the melanosome membrane. It carries out the reaction heme b(in) + ATP + H2O = heme b(out) + ADP + phosphate + H(+). It catalyses the reaction coproporphyrin III(in) + ATP + H2O = coproporphyrin III(out) + ADP + phosphate + H(+). The catalysed reaction is pheophorbide a(in) + ATP + H2O = pheophorbide a(out) + ADP + phosphate + H(+). The enzyme catalyses coproporphyrinogen III(in) + ATP + H2O = coproporphyrinogen III(out) + ADP + phosphate + H(+). It carries out the reaction protoporphyrin IX(in) + ATP + H2O = protoporphyrin IX(out) + ADP + phosphate + H(+). It catalyses the reaction coproporphyrin I(in) + ATP + H2O = coproporphyrin I(out) + ADP + phosphate + H(+). The catalysed reaction is uroporphyrin I(in) + ATP + H2O = uroporphyrin I(out) + ADP + phosphate + H(+). The enzyme catalyses uroporphyrin III(in) + ATP + H2O = uroporphyrin III(out) + ADP + phosphate + H(+). Its activity is regulated as follows. ATPase activity is inhibited by MgATP with an IC(50) of 1.03 mM and up-regulated by coporphyrin III&gt; hemin &gt; protoporphyrin IX. ATPase activity for hemin is up-regulated by glutathione. The ATPase activity is impaired by increasing copper concentrations (0-300 uM). The ATPase activity is stimulated in presence of glutathione for increasing copper concentrations (0-300 uM). Functionally, ATP-dependent transporter that catalyzes the transport of a broad-spectrum of porphyrins from the cytoplasm to the extracellular space through the plasma membrane or into the vesicle lumen. May also function as an ATP-dependent importer of porphyrins from the cytoplasm into the mitochondria, in turn may participate in the de novo heme biosynthesis regulation and in the coordination of heme and iron homeostasis during phenylhydrazine stress. May also play a key role in the early steps of melanogenesis producing PMEL amyloid fibrils. In vitro, it confers to cells a resistance to toxic metal such as arsenic and cadmium and against chemotherapeutics agent such as 5-fluorouracil, SN-38 and vincristin. In addition may play a role in the transition metal homeostasis. The polypeptide is ATP-binding cassette sub-family B member 6 (Homo sapiens (Human)).